A 209-amino-acid chain; its full sequence is Uracil phosphoribosyltransferase (209 aa).

Residues R79, R104, and 131–139 each bind 5-phospho-alpha-D-ribose 1-diphosphate; that span reads DPMLATGGT. Uracil is bound by residues I194 and 199-201; that span reads GDA. D200 is a binding site for 5-phospho-alpha-D-ribose 1-diphosphate.

The protein belongs to the UPRTase family. Mg(2+) is required as a cofactor.

It carries out the reaction UMP + diphosphate = 5-phospho-alpha-D-ribose 1-diphosphate + uracil. It participates in pyrimidine metabolism; UMP biosynthesis via salvage pathway; UMP from uracil: step 1/1. Its activity is regulated as follows. Allosterically activated by GTP. Its function is as follows. Catalyzes the conversion of uracil and 5-phospho-alpha-D-ribose 1-diphosphate (PRPP) to UMP and diphosphate. The protein is Uracil phosphoribosyltransferase of Pseudoalteromonas translucida (strain TAC 125).